A 139-amino-acid chain; its full sequence is Serpin-like protein HMSD (139 aa).

Residues 1–20 (MSISSALAMVFMGAKGNTAA) form the signal peptide. The N-linked (GlcNAc...) asparagine glycan is linked to N50.

This sequence belongs to the serpin family. As to expression, highly expressed in dendritic cells and primary leukemia cells, especially those of myeloid lineage.

The protein resides in the secreted. Its function is as follows. Putative serine protease inhibitor. This chain is Serpin-like protein HMSD (HMSD), found in Homo sapiens (Human).